Here is a 1158-residue protein sequence, read N- to C-terminus: ATP-dependent helicase/deoxyribonuclease subunit B (1158 aa).

The region spanning 1–275 (MTLHAYLGRA…QYFNQLYRFN (275 aa)) is the UvrD-like helicase ATP-binding domain. 8–15 (GRAGTGKS) is a binding site for ATP. A UvrD-like helicase C-terminal domain is found at 269-583 (NQLYRFNNQD…SIGTMDLAKV (315 aa)). 4 residues coordinate [4Fe-4S] cluster: cysteine 784, cysteine 1112, cysteine 1115, and cysteine 1121.

The protein belongs to the helicase family. AddB/RexB type 1 subfamily. In terms of assembly, heterodimer of AddA and AddB. Requires Mg(2+) as cofactor. [4Fe-4S] cluster is required as a cofactor.

The heterodimer acts as both an ATP-dependent DNA helicase and an ATP-dependent, dual-direction single-stranded exonuclease. Recognizes the chi site generating a DNA molecule suitable for the initiation of homologous recombination. The AddB subunit has 5' -&gt; 3' nuclease activity but not helicase activity. In Staphylococcus aureus (strain MSSA476), this protein is ATP-dependent helicase/deoxyribonuclease subunit B.